The sequence spans 289 residues: uncharacterized protein (289 aa).

9 consecutive transmembrane segments (helical) span residues 13–32 (INFA…LSGS), 37–59 (LIIS…HLND), 80–99 (IVTE…IFFI), 104–121 (EIAL…WLYS), 141–160 (VFTY…TIFS), 165–183 (VGVV…GFFL), 203–225 (VLSP…FVVI), 235–252 (TSSL…FAIY), and 265–287 (IISS…AIGC).

The protein resides in the cell membrane. This is an uncharacterized protein from Archaeoglobus fulgidus (strain ATCC 49558 / DSM 4304 / JCM 9628 / NBRC 100126 / VC-16).